The primary structure comprises 420 residues: Probable ABC transporter-binding protein DR_1438 (420 aa).

The first 24 residues, 1-24 (MKKFAAVLGLTVAFAAASQAHAVT), serve as a signal peptide directing secretion.

It belongs to the bacterial solute-binding protein 1 family.

Its function is as follows. Probably part of a binding-protein-dependent transport system. The chain is Probable ABC transporter-binding protein DR_1438 from Deinococcus radiodurans (strain ATCC 13939 / DSM 20539 / JCM 16871 / CCUG 27074 / LMG 4051 / NBRC 15346 / NCIMB 9279 / VKM B-1422 / R1).